The sequence spans 299 residues: Acetaldehyde dehydrogenase 1 (299 aa).

Residue Cys-130 is the Acyl-thioester intermediate of the active site. NAD(+) contacts are provided by residues 161 to 169 (SVGPGTRKN) and Asn-272.

This sequence belongs to the acetaldehyde dehydrogenase family.

It carries out the reaction acetaldehyde + NAD(+) + CoA = acetyl-CoA + NADH + H(+). The sequence is that of Acetaldehyde dehydrogenase 1 (mhpF) from Burkholderia cenocepacia (strain ATCC BAA-245 / DSM 16553 / LMG 16656 / NCTC 13227 / J2315 / CF5610) (Burkholderia cepacia (strain J2315)).